A 182-amino-acid polypeptide reads, in one-letter code: Photosystem I assembly protein Ycf4 (182 aa).

The next 2 helical transmembrane spans lie at W22–L42 and V63–F83.

It belongs to the Ycf4 family.

The protein resides in the plastid. It localises to the chloroplast thylakoid membrane. Seems to be required for the assembly of the photosystem I complex. This Oltmannsiellopsis viridis (Marine flagellate) protein is Photosystem I assembly protein Ycf4.